The chain runs to 82 residues: Splicing factor U2AF 35 kDa subunit (82 aa).

At A2 the chain carries N-acetylalanine. The C3H1-type zinc finger occupies 12-40 (EKDKVNCSFYFKIGACRHGDRCSRLHNKP). At K39 the chain carries N6-methyllysine. The 18-residue stretch at 65 to 82 (SHCHVSDVEVQEHYDNFF) folds into the RRM domain.

This sequence belongs to the splicing factor SR family. In terms of assembly, identified in the spliceosome C complex. Heterodimer with U2AF2. Interacts (via RS domain) with PHF5A (via N-terminus). Interacts with ZRANB2. Interacts with SDE2. Interacts with SF3B1.

It is found in the nucleus. Its subcellular location is the nucleus speckle. In terms of biological role, plays a critical role in both constitutive and enhancer-dependent splicing by mediating protein-protein interactions and protein-RNA interactions required for accurate 3'-splice site selection. Recruits U2 snRNP to the branch point. Directly mediates interactions between U2AF2 and proteins bound to the enhancers and thus may function as a bridge between U2AF2 and the enhancer complex to recruit it to the adjacent intron. The protein is Splicing factor U2AF 35 kDa subunit (U2AF1) of Sus scrofa (Pig).